We begin with the raw amino-acid sequence, 50 residues long: uncharacterized protein (50 aa).

This is an uncharacterized protein from Sinorhizobium fredii (strain NBRC 101917 / NGR234).